A 246-amino-acid polypeptide reads, in one-letter code: Hsp70 nucleotide exchange factor fes-1 (246 aa).

Residues 23–40 (QSYHSNGAPTPNNNSGPA) are compositionally biased toward polar residues. A disordered region spans residues 23–63 (QSYHSNGAPTPNNNSGPATGTGAVATSPAPQVTGSGPRPVD). ARM repeat units follow at residues 48–92 (TSPA…DPSP), 113–152 (LDNA…TAVQ), 155–196 (QKTQ…SAVR), and 214–244 (HEVL…NKAK).

It belongs to the FES1 family.

The protein localises to the cytoplasm. Functions as a nucleotide exchange factor (NEF) for Hsp70 chaperones which accelerates the release of ADP. Required for fully efficient Hsp70-mediated folding of proteins. The polypeptide is Hsp70 nucleotide exchange factor fes-1 (fes-1) (Neurospora crassa (strain ATCC 24698 / 74-OR23-1A / CBS 708.71 / DSM 1257 / FGSC 987)).